We begin with the raw amino-acid sequence, 259 residues long: Phosphatidylglycerol--prolipoprotein diacylglyceryl transferase (259 aa).

The next 4 helical transmembrane spans lie at 9–29 (IGPFAIHWYALCIMTGLVLAV), 47–67 (IDFIIIAFPIAIIGARLYYVI), 83–103 (IWNGGIAIYGGLITGAIVLFI), and 109–129 (VLNPIRFLDIIAPGVMLAQAI). Position 131 (Arg-131) interacts with a 1,2-diacyl-sn-glycero-3-phospho-(1'-sn-glycerol). 3 consecutive transmembrane segments (helical) span residues 167–187 (MPTFLFESVWNIIGFTIICYL), 194–214 (LLEGEVLAFYLIWYGIGRFVI), and 227–247 (LRVSQIVSIVLIILGIVFVIL).

The protein belongs to the Lgt family.

It is found in the cell membrane. It catalyses the reaction L-cysteinyl-[prolipoprotein] + a 1,2-diacyl-sn-glycero-3-phospho-(1'-sn-glycerol) = an S-1,2-diacyl-sn-glyceryl-L-cysteinyl-[prolipoprotein] + sn-glycerol 1-phosphate + H(+). It participates in protein modification; lipoprotein biosynthesis (diacylglyceryl transfer). Functionally, catalyzes the transfer of the diacylglyceryl group from phosphatidylglycerol to the sulfhydryl group of the N-terminal cysteine of a prolipoprotein, the first step in the formation of mature lipoproteins. This Streptococcus uberis (strain ATCC BAA-854 / 0140J) protein is Phosphatidylglycerol--prolipoprotein diacylglyceryl transferase.